The sequence spans 1260 residues: Myosin-1 (1260 aa).

One can recognise a Myosin motor domain in the interval Val34 to Asp713. Gly127–Thr134 is a binding site for ATP. At Ser355 the chain carries Phosphoserine. Residues Ser402–Ser484 are actin-binding. 2 consecutive IQ domains span residues Tyr717–Ser737 and Ala738–Arg763. Positions Lys769–Ala959 constitute a TH1 domain. 2 stretches are compositionally biased toward polar residues: residues Ser948–Gln963 and Thr972–Tyr988. Residues Ser948 to Pro1106 form a disordered region. Residues Gly989–His1013 are compositionally biased toward low complexity. The segment covering Gln1030 to Arg1064 has biased composition (polar residues). Over residues Gln1065–Ala1082 the composition is skewed to low complexity. Positions Ala1092 to Thr1101 are enriched in pro residues. Residues Gln1103–Glu1165 form the SH3 domain.

This sequence belongs to the TRAFAC class myosin-kinesin ATPase superfamily. Myosin family. Post-translationally, phosphorylation of the TEDS site (Ser-355) is required for the polarization of the actin cytoskeleton. Phosphorylation probably activates the myosin-I ATPase activity.

The protein localises to the cytoplasm. It localises to the cytoskeleton. Its subcellular location is the actin patch. In terms of biological role, type-I myosin implicated in the organization of the actin cytoskeleton. Required for proper actin cytoskeleton polarization. At the cell cortex, assembles in patch-like structures together with proteins from the actin-polymerizing machinery and promotes actin assembly. Functions as actin nucleation-promoting factor (NPF) for the Arp2/3 complex. This Kluyveromyces lactis (strain ATCC 8585 / CBS 2359 / DSM 70799 / NBRC 1267 / NRRL Y-1140 / WM37) (Yeast) protein is Myosin-1 (MYO1).